A 110-amino-acid polypeptide reads, in one-letter code: Cyclin-dependent protein kinase inhibitor SMR8 (110 aa).

Interacts with CDKA-1 and D-type cyclins. Expressed in the root vascular tissue.

Its function is as follows. Probable cyclin-dependent protein kinase (CDK) inhibitor that functions as a repressor of mitosis in the endoreduplication cell cycle. The protein is Cyclin-dependent protein kinase inhibitor SMR8 of Arabidopsis thaliana (Mouse-ear cress).